A 240-amino-acid chain; its full sequence is tRNA (guanine-N(7)-)-methyltransferase (240 aa).

Residues 1-10 are compositionally biased toward polar residues; that stretch reads MTESQDTPIT. The tract at residues 1-20 is disordered; it reads MTESQDTPITTDGEARPHRR. S-adenosyl-L-methionine contacts are provided by Glu70, Glu95, Asp122, and Asp145. Asp145 is a catalytic residue. Substrate is bound by residues Lys149, Asp181, and 218 to 221; that span reads TKFE.

It belongs to the class I-like SAM-binding methyltransferase superfamily. TrmB family.

The catalysed reaction is guanosine(46) in tRNA + S-adenosyl-L-methionine = N(7)-methylguanosine(46) in tRNA + S-adenosyl-L-homocysteine. The protein operates within tRNA modification; N(7)-methylguanine-tRNA biosynthesis. Functionally, catalyzes the formation of N(7)-methylguanine at position 46 (m7G46) in tRNA. The chain is tRNA (guanine-N(7)-)-methyltransferase from Pseudomonas putida (strain W619).